The primary structure comprises 319 residues: Thioredoxin reductase (319 aa).

FAD-binding positions include 11–14, 40–41, Gln-45, Asn-54, Val-87, Cys-145, Asp-288, and 295–297; these read SGPA, IA, and RQA. The cysteines at positions 142 and 145 are disulfide-linked.

The protein belongs to the class-II pyridine nucleotide-disulfide oxidoreductase family. In terms of assembly, homodimer. The cofactor is FAD.

Its subcellular location is the cytoplasm. The enzyme catalyses [thioredoxin]-dithiol + NADP(+) = [thioredoxin]-disulfide + NADPH + H(+). In Yarrowia lipolytica (strain CLIB 122 / E 150) (Yeast), this protein is Thioredoxin reductase (TRR1).